Here is a 94-residue protein sequence, read N- to C-terminus: Gibberellin-regulated protein 11 (94 aa).

An N-terminal signal peptide occupies residues 1 to 23 (MAVFRVLLASLLISLLVLDFVHA).

The protein belongs to the GASA family. In terms of processing, six disulfide bonds may be present.

The protein resides in the secreted. Gibberellin-regulated protein that may function in hormonal controlled steps of development such as seed germination, flowering and seed maturation. The chain is Gibberellin-regulated protein 11 (GASA11) from Arabidopsis thaliana (Mouse-ear cress).